A 308-amino-acid polypeptide reads, in one-letter code: 2-methylisocitrate lyase (308 aa).

51–53 (SGA) lines the substrate pocket. Positions 90 and 92 each coordinate Mg(2+). Residues 127 to 128 (CG), Arg160, Glu190, 212 to 214 (NMT), Arg243, and Arg272 contribute to the substrate site.

This sequence belongs to the isocitrate lyase/PEP mutase superfamily. Methylisocitrate lyase family. In terms of assembly, homotetramer; dimer of dimers. Requires Mg(2+) as cofactor.

It catalyses the reaction (2S,3R)-3-hydroxybutane-1,2,3-tricarboxylate = pyruvate + succinate. It functions in the pathway organic acid metabolism; propanoate degradation. Involved in the catabolism of short chain fatty acids (SCFA) via the 2-methylcitrate cycle I (propionate degradation route). Catalyzes the thermodynamically favored C-C bond cleavage of (2R,3S)-2-methylisocitrate to yield pyruvate and succinate via an alpha-carboxy-carbanion intermediate. The chain is 2-methylisocitrate lyase from Aeropyrum pernix (strain ATCC 700893 / DSM 11879 / JCM 9820 / NBRC 100138 / K1).